We begin with the raw amino-acid sequence, 123 residues long: Large ribosomal subunit protein bL12 (123 aa).

This sequence belongs to the bacterial ribosomal protein bL12 family. As to quaternary structure, homodimer. Part of the ribosomal stalk of the 50S ribosomal subunit. Forms a multimeric L10(L12)X complex, where L10 forms an elongated spine to which 2 to 4 L12 dimers bind in a sequential fashion. Binds GTP-bound translation factors.

In terms of biological role, forms part of the ribosomal stalk which helps the ribosome interact with GTP-bound translation factors. Is thus essential for accurate translation. The sequence is that of Large ribosomal subunit protein bL12 from Dechloromonas aromatica (strain RCB).